The following is a 522-amino-acid chain: 2-isopropylmalate synthase (522 aa).

The Pyruvate carboxyltransferase domain maps to 5–267 (VIIFDTTLRD…DCGINAKEIH (263 aa)). The Mn(2+) site is built by Asp-14, His-202, His-204, and Asn-238. The interval 392 to 522 (QLQHMMVHSD…IHKERELGGV (131 aa)) is regulatory domain.

The protein belongs to the alpha-IPM synthase/homocitrate synthase family. LeuA type 1 subfamily. Homodimer. The cofactor is Mn(2+).

It is found in the cytoplasm. The enzyme catalyses 3-methyl-2-oxobutanoate + acetyl-CoA + H2O = (2S)-2-isopropylmalate + CoA + H(+). It participates in amino-acid biosynthesis; L-leucine biosynthesis; L-leucine from 3-methyl-2-oxobutanoate: step 1/4. Catalyzes the condensation of the acetyl group of acetyl-CoA with 3-methyl-2-oxobutanoate (2-ketoisovalerate) to form 3-carboxy-3-hydroxy-4-methylpentanoate (2-isopropylmalate). The sequence is that of 2-isopropylmalate synthase from Shewanella frigidimarina (strain NCIMB 400).